Reading from the N-terminus, the 198-residue chain is CASP-like protein 2B1 (198 aa).

Residues 1 to 12 lie on the Cytoplasmic side of the membrane; it reads MAAAMGLERKAK. The helical transmembrane segment at 13–33 threads the bilayer; it reads VAEVALRCAVCALAALAAALV. The Extracellular segment spans residues 34–55; that stretch reads GTGSQTRTFFSLEKKARFTDMK. The helical transmembrane segment at 56 to 76 threads the bilayer; that stretch reads ALVLLVAAHGAAAVYSLLQLA. Residues 77–91 are Cytoplasmic-facing; that stretch reads RCAAAAAWKGGSNGG. Residues 92 to 112 traverse the membrane as a helical segment; it reads AAVVAWSVFSCDQAVAYALMA. Residues 113 to 149 lie on the Extracellular side of the membrane; the sequence is ATAAALQSSVVGKRGQPELQWMPVCGLYGAFCRRVGE. Residues 150 to 170 traverse the membrane as a helical segment; the sequence is GLAAAVAAGLAAVLLAAVSAF. Residues 171 to 198 are Cytoplasmic-facing; the sequence is NLFRLYGGGGGGRKSSAGAVSGNGANTW.

It belongs to the Casparian strip membrane proteins (CASP) family. In terms of assembly, homodimer and heterodimers.

Its subcellular location is the cell membrane. This chain is CASP-like protein 2B1, found in Oryza sativa subsp. japonica (Rice).